The following is a 44-amino-acid chain: Photosystem I reaction center subunit IX (44 aa).

Residues 9 to 29 (YMRSAPVVAAAWITMTAGIII) form a helical membrane-spanning segment.

The protein belongs to the PsaJ family.

The protein resides in the cellular thylakoid membrane. May help in the organization of the PsaE and PsaF subunits. This chain is Photosystem I reaction center subunit IX, found in Prochlorococcus marinus (strain MIT 9312).